The following is a 163-amino-acid chain: NADH-quinone oxidoreductase subunit I (163 aa).

4Fe-4S ferredoxin-type domains follow at residues 54–84 (LRRY…IDSH) and 94–123 (TRYD…LTRL). Positions 64, 67, 70, 74, 103, 106, 109, and 113 each coordinate [4Fe-4S] cluster.

This sequence belongs to the complex I 23 kDa subunit family. As to quaternary structure, NDH-1 is composed of 14 different subunits. Subunits NuoA, H, J, K, L, M, N constitute the membrane sector of the complex. [4Fe-4S] cluster serves as cofactor.

The protein resides in the cell inner membrane. The catalysed reaction is a quinone + NADH + 5 H(+)(in) = a quinol + NAD(+) + 4 H(+)(out). In terms of biological role, NDH-1 shuttles electrons from NADH, via FMN and iron-sulfur (Fe-S) centers, to quinones in the respiratory chain. The immediate electron acceptor for the enzyme in this species is believed to be ubiquinone. Couples the redox reaction to proton translocation (for every two electrons transferred, four hydrogen ions are translocated across the cytoplasmic membrane), and thus conserves the redox energy in a proton gradient. This Halorhodospira halophila (strain DSM 244 / SL1) (Ectothiorhodospira halophila (strain DSM 244 / SL1)) protein is NADH-quinone oxidoreductase subunit I.